The following is a 350-amino-acid chain: MQLLKQNYKKYILDLNDAQFNRAVKPIIEQDYRINQIIEWIYAKKAVSFESFTNIPKELRNKLDEKFFLRTLKIVKKEKSLIDSTIRYTFRTADKKYFFAVFLPANGKNSVCISSQIGCPIMCAFCSSGKTKLARNLSRGEIIEQILQVENDTKEKISGILFMGMGEPMLNFNNLISVLNSLLSSKEFGIGKRHITVSSVGIVPAVKKLADDNFGVRLALSLHAVDERQRKKLVPDNLGFSIEDILKAGKYYLKKTNSHLTIEYVLVKGINISSADAHKLARLLKRCDLINSDVQVNLIPFNPVTDVQFQRPDKKSINKFKSILKLNGITVNVRQSKGANINAACGQLGY.

The Radical SAM core domain occupies 105 to 342 (ANGKNSVCIS…VRQSKGANIN (238 aa)). The cysteines at positions 112 and 345 are disulfide-linked. Cysteine 119, cysteine 123, and cysteine 126 together coordinate [4Fe-4S] cluster. Residues 166-167 (GE), serine 198, 221-223 (SLH), and asparagine 302 each bind S-adenosyl-L-methionine. Cysteine 345 acts as the S-methylcysteine intermediate in catalysis.

This sequence belongs to the radical SAM superfamily. RlmN family. [4Fe-4S] cluster is required as a cofactor.

Its subcellular location is the cytoplasm. It catalyses the reaction adenosine(2503) in 23S rRNA + 2 reduced [2Fe-2S]-[ferredoxin] + 2 S-adenosyl-L-methionine = 2-methyladenosine(2503) in 23S rRNA + 5'-deoxyadenosine + L-methionine + 2 oxidized [2Fe-2S]-[ferredoxin] + S-adenosyl-L-homocysteine. The enzyme catalyses adenosine(37) in tRNA + 2 reduced [2Fe-2S]-[ferredoxin] + 2 S-adenosyl-L-methionine = 2-methyladenosine(37) in tRNA + 5'-deoxyadenosine + L-methionine + 2 oxidized [2Fe-2S]-[ferredoxin] + S-adenosyl-L-homocysteine. In terms of biological role, specifically methylates position 2 of adenine 2503 in 23S rRNA and position 2 of adenine 37 in tRNAs. The polypeptide is Probable dual-specificity RNA methyltransferase RlmN (Endomicrobium trichonymphae).